Reading from the N-terminus, the 407-residue chain is Prolyl hydroxylase EGLN2 (407 aa).

2 stretches are compositionally biased toward low complexity: residues 1–24 and 57–75; these read MDSP…SSEP and ASAG…TASP. 3 disordered regions span residues 1 to 34, 50 to 89, and 108 to 157; these read MDSP…RARM, CPGV…GELR, and AAQG…CSSG. The short motif at 89–134 is the Bipartite nuclear localization signal element; it reads RPLQSEGAAALVTKGCQRLAAQGARPEAPKRKWAEDGGDAPSPSKR. Position 130 is a phosphoserine (serine 130). Residues 225 to 235 form a beta(2)beta(3) 'finger-like' loop region; it reads VSQRAIPPRSI. In terms of domain architecture, Fe2OG dioxygenase spans 278–376; it reads GRTKAMVACY…RYAITVWYFD (99 aa). Positions 297, 299, and 358 each coordinate Fe cation. 2-oxoglutarate is bound at residue arginine 367.

As to quaternary structure, interacts (preferably isoform p40) with SIAH2; the interaction targets both SIAH2 isoforms for proteasomal degradation in vitro. Interacts with LIMD1, WTIP and AJUBA. Fe(2+) serves as cofactor. Requires L-ascorbate as cofactor. Ubiquitinated by SIAH1 and/or SIAH2 in response to the unfolded protein response (UPR), leading to its degradation. In terms of tissue distribution, expressed in adult and fetal heart, brain, liver, lung, skeletal muscle, and kidney. Also expressed in testis and placenta. Highest levels in adult brain, placenta, lung, kidney, and testis. Expressed in hormone responsive tissues, including normal and cancerous mammary, ovarian and prostate epithelium.

It is found in the nucleus. The enzyme catalyses L-prolyl-[protein] + 2-oxoglutarate + O2 = trans-4-hydroxy-L-prolyl-[protein] + succinate + CO2. It catalyses the reaction L-prolyl-[hypoxia-inducible factor alpha subunit] + 2-oxoglutarate + O2 = trans-4-hydroxy-L-prolyl-[hypoxia-inducible factor alpha subunit] + succinate + CO2. Prolyl hydroxylase that mediates hydroxylation of proline residues in target proteins, such as ATF4, IKBKB, CEP192 and HIF1A. Target proteins are preferentially recognized via a LXXLAP motif. Cellular oxygen sensor that catalyzes, under normoxic conditions, the post-translational formation of 4-hydroxyproline in hypoxia-inducible factor (HIF) alpha proteins. Hydroxylates a specific proline found in each of the oxygen-dependent degradation (ODD) domains (N-terminal, NODD, and C-terminal, CODD) of HIF1A. Also hydroxylates HIF2A. Has a preference for the CODD site for both HIF1A and HIF2A. Hydroxylated HIFs are then targeted for proteasomal degradation via the von Hippel-Lindau ubiquitination complex. Under hypoxic conditions, the hydroxylation reaction is attenuated allowing HIFs to escape degradation resulting in their translocation to the nucleus, heterodimerization with HIF1B, and increased expression of hypoxy-inducible genes. EGLN2 is involved in regulating hypoxia tolerance and apoptosis in cardiac and skeletal muscle. Also regulates susceptibility to normoxic oxidative neuronal death. Links oxygen sensing to cell cycle and primary cilia formation by hydroxylating the critical centrosome component CEP192 which promotes its ubiquitination and subsequent proteasomal degradation. Hydroxylates IKBKB, mediating NF-kappa-B activation in hypoxic conditions. Also mediates hydroxylation of ATF4, leading to decreased protein stability of ATF4. The protein is Prolyl hydroxylase EGLN2 of Homo sapiens (Human).